The primary structure comprises 803 residues: Translation initiation factor IF-2 (803 aa).

Basic and acidic residues predominate over residues 65–75; sequence PDKVEEKKEHT. The interval 65-186 is disordered; the sequence is PDKVEEKKEH…PKSRKSKTLK (122 aa). Residues 175 to 185 show a composition bias toward basic residues; that stretch reads NKPKSRKSKTL. The tr-type G domain occupies 300 to 468; sequence IRPPVVTIMG…ILLTADAALE (169 aa). The G1 stretch occupies residues 309 to 316; the sequence is GHVDHGKT. Position 309-316 (309-316) interacts with GTP; it reads GHVDHGKT. Residues 334 to 338 are G2; sequence GITQH. The interval 355–358 is G3; it reads DTPG. GTP-binding positions include 355 to 359 and 409 to 412; these read DTPGH and NKID. The tract at residues 409 to 412 is G4; the sequence is NKID. Positions 445 to 447 are G5; that stretch reads SAK.

It belongs to the TRAFAC class translation factor GTPase superfamily. Classic translation factor GTPase family. IF-2 subfamily.

The protein localises to the cytoplasm. One of the essential components for the initiation of protein synthesis. Protects formylmethionyl-tRNA from spontaneous hydrolysis and promotes its binding to the 30S ribosomal subunits. Also involved in the hydrolysis of GTP during the formation of the 70S ribosomal complex. This chain is Translation initiation factor IF-2, found in Tropheryma whipplei (strain TW08/27) (Whipple's bacillus).